We begin with the raw amino-acid sequence, 38 residues long: Large ribosomal subunit protein bL36 (38 aa).

The protein belongs to the bacterial ribosomal protein bL36 family.

This chain is Large ribosomal subunit protein bL36, found in Prochlorococcus marinus (strain SARG / CCMP1375 / SS120).